We begin with the raw amino-acid sequence, 690 residues long: MTKKILLIEIGTEELPARLLSKISLYFYKNFIKELDFHNISYKNIKYFSTPRRLALKIKDIDITERFVEIKKRGPSIINSYDKDGFLTEAATRWLKHCGININQAIRLKNEKGEWLFYKTRKKQENIESLIPKITESALKNISIKKSMRWGQDNQKFSRPIRNIVILLDKKVIPGDVFNITSKNLLQNHLSLKDSQIKIKDAKDYPKILLEKNNIIADYFIRKEKIIEDIENIAKKIKGFIKKNNVLIEEVTALVESPKALLVNFQEKFLQIPKKILINTIEKKQKCFPIYNSEKKLLPYFIFISNIQTQESEKIIIGNQRVMHARLSDAEFFFKNDRKVKLESRLLSLKKVLFQNNLGSLYEKTLRIKLLIKWIAKYSSSDVEDSIRAALLSKCDLVTDVVCEFPELQGKIGMYYALEDKEKKDVATALEEQYLPRFSGDKLPCTLIGCGLSIADKMDTLSGMFYIGNIPSSDKDPFALRRLAIGIIRIILEKNIPLNLEDLIKKSLSLYNKKNEEDLILFDKMIKFFMIRLFHWYEETGYSAKIIKSVLSCKSIELIDIHKKIQAISFFKKLKDSQSIILSIKRISNILAKEKEKINGDINKKLMIEKEEIILFNNIEEFDNYTKNLFLEKKYNDILIKIKSFENPIYNFFKKVKIYHSDSKIRLNRLLLLSKLKKIFFKIADFSYLY.

The protein belongs to the class-II aminoacyl-tRNA synthetase family. Tetramer of two alpha and two beta subunits.

The protein resides in the cytoplasm. The catalysed reaction is tRNA(Gly) + glycine + ATP = glycyl-tRNA(Gly) + AMP + diphosphate. This chain is Glycine--tRNA ligase beta subunit, found in Buchnera aphidicola subsp. Acyrthosiphon pisum (strain Tuc7).